Reading from the N-terminus, the 526-residue chain is Peptide chain release factor 3 (526 aa).

The tr-type G domain occupies D9–L277. Residues S18–T25, D86–H90, and N140–D143 each bind GTP.

Belongs to the TRAFAC class translation factor GTPase superfamily. Classic translation factor GTPase family. PrfC subfamily.

It is found in the cytoplasm. Functionally, increases the formation of ribosomal termination complexes and stimulates activities of RF-1 and RF-2. It binds guanine nucleotides and has strong preference for UGA stop codons. It may interact directly with the ribosome. The stimulation of RF-1 and RF-2 is significantly reduced by GTP and GDP, but not by GMP. The chain is Peptide chain release factor 3 from Shewanella frigidimarina (strain NCIMB 400).